The sequence spans 186 residues: Ribosome-recycling factor (186 aa).

The protein belongs to the RRF family.

It localises to the cytoplasm. In terms of biological role, responsible for the release of ribosomes from messenger RNA at the termination of protein biosynthesis. May increase the efficiency of translation by recycling ribosomes from one round of translation to another. In Rubrobacter xylanophilus (strain DSM 9941 / JCM 11954 / NBRC 16129 / PRD-1), this protein is Ribosome-recycling factor.